A 92-amino-acid polypeptide reads, in one-letter code: Acylphosphatase (92 aa).

A disulfide bridge links C5 with C49. Residues 5-92 (CIIAWIYGRV…SGELTDFRIR (88 aa)) enclose the Acylphosphatase-like domain. Catalysis depends on residues R20 and N38.

Belongs to the acylphosphatase family.

The catalysed reaction is an acyl phosphate + H2O = a carboxylate + phosphate + H(+). This Escherichia coli O1:K1 / APEC protein is Acylphosphatase.